The primary structure comprises 235 residues: 6-phosphogluconolactonase (235 aa).

This sequence belongs to the glucosamine/galactosamine-6-phosphate isomerase family. 6-phosphogluconolactonase subfamily.

The enzyme catalyses 6-phospho-D-glucono-1,5-lactone + H2O = 6-phospho-D-gluconate + H(+). Its pathway is carbohydrate degradation; pentose phosphate pathway; D-ribulose 5-phosphate from D-glucose 6-phosphate (oxidative stage): step 2/3. In terms of biological role, hydrolysis of 6-phosphogluconolactone to 6-phosphogluconate. In Borreliella burgdorferi (strain ATCC 35210 / DSM 4680 / CIP 102532 / B31) (Borrelia burgdorferi), this protein is 6-phosphogluconolactonase (pgl).